Consider the following 172-residue polypeptide: Shikimate kinase (172 aa).

14–19 (GAGKST) lines the ATP pocket. A Mg(2+)-binding site is contributed by Ser18. Substrate-binding residues include Asp36, Arg60, and Gly82. An ATP-binding site is contributed by Arg120. Residue Arg139 coordinates substrate. Gln156 lines the ATP pocket.

Belongs to the shikimate kinase family. Monomer. Requires Mg(2+) as cofactor.

It localises to the cytoplasm. The catalysed reaction is shikimate + ATP = 3-phosphoshikimate + ADP + H(+). It functions in the pathway metabolic intermediate biosynthesis; chorismate biosynthesis; chorismate from D-erythrose 4-phosphate and phosphoenolpyruvate: step 5/7. In terms of biological role, catalyzes the specific phosphorylation of the 3-hydroxyl group of shikimic acid using ATP as a cosubstrate. The polypeptide is Shikimate kinase (Aliivibrio salmonicida (strain LFI1238) (Vibrio salmonicida (strain LFI1238))).